The sequence spans 320 residues: Eukaryotic translation initiation factor 3 subunit G (320 aa).

The interval 1 to 59 (MPTGDFDSKPSWADQVEEEGEDDKCVTSELLKGIPLATGDTSPEPELLPGAPLPPPKEV) is disordered. 2 positions are modified to phosphoserine: serine 8 and serine 11. Phosphothreonine is present on residues threonine 38 and threonine 41. 4 positions are modified to phosphoserine: serine 42, serine 189, serine 223, and serine 264. The segment at 209–234 (KTGKYVPPSLRDGASRRGESMQPNRR) is disordered. Positions 221–234 (GASRRGESMQPNRR) are enriched in basic and acidic residues. The RRM domain maps to 239 to 317 (ATIRVTNLSE…LILNVEWAKP (79 aa)).

As to quaternary structure, component of the eukaryotic translation initiation factor 3 (eIF-3) complex, which is composed of 13 subunits: EIF3A, EIF3B, EIF3C, EIF3D, EIF3E, EIF3F, EIF3G, EIF3H, EIF3I, EIF3J, EIF3K, EIF3L and EIF3M. The eIF-3 complex appears to include 3 stable modules: module A is composed of EIF3A, EIF3B, EIF3G and EIF3I; module B is composed of EIF3F, EIF3H, and EIF3M; and module C is composed of EIF3C, EIF3D, EIF3E, EIF3K and EIF3L. EIF3C of module C binds EIF3B of module A and EIF3H of module B, thereby linking the three modules. EIF3J is a labile subunit that binds to the eIF-3 complex via EIF3B. The eIF-3 complex interacts with RPS6KB1 under conditions of nutrient depletion. Mitogenic stimulation leads to binding and activation of a complex composed of MTOR and RPTOR, leading to phosphorylation and release of RPS6KB1 and binding of EIF4B to eIF-3. Interacts (via C-terminus) with AIFM1 (via N-terminus). Interacts with DHX33; the interaction is independent of RNA. Post-translationally, phosphorylated. Phosphorylation is enhanced upon serum stimulation.

Its subcellular location is the cytoplasm. The protein localises to the nucleus. It is found in the perinuclear region. Its function is as follows. RNA-binding component of the eukaryotic translation initiation factor 3 (eIF-3) complex, which is required for several steps in the initiation of protein synthesis. The eIF-3 complex associates with the 40S ribosome and facilitates the recruitment of eIF-1, eIF-1A, eIF-2:GTP:methionyl-tRNAi and eIF-5 to form the 43S pre-initiation complex (43S PIC). The eIF-3 complex stimulates mRNA recruitment to the 43S PIC and scanning of the mRNA for AUG recognition. The eIF-3 complex is also required for disassembly and recycling of post-termination ribosomal complexes and subsequently prevents premature joining of the 40S and 60S ribosomal subunits prior to initiation. The eIF-3 complex specifically targets and initiates translation of a subset of mRNAs involved in cell proliferation, including cell cycling, differentiation and apoptosis, and uses different modes of RNA stem-loop binding to exert either translational activation or repression. This subunit can bind 18S rRNA. In terms of biological role, (Microbial infection) In case of FCV infection, plays a role in the ribosomal termination-reinitiation event leading to the translation of VP2. The sequence is that of Eukaryotic translation initiation factor 3 subunit G from Homo sapiens (Human).